A 563-amino-acid polypeptide reads, in one-letter code: (R)-mandelonitrile lyase 2 (563 aa).

Residues methionine 1 to serine 27 form the signal peptide. Residues threonine 63 to serine 64, glutamate 82 to arginine 83, valine 129, threonine 133, and asparagine 137 to valine 140 contribute to the FAD site. Asparagine 145 and asparagine 162 each carry an N-linked (GlcNAc...) asparagine glycan. Valine 244 lines the FAD pocket. Position 355 (cysteine 355) interacts with substrate. 2 N-linked (GlcNAc...) asparagine glycosylation sites follow: asparagine 379 and asparagine 419. Cysteine 426 and cysteine 477 form a disulfide bridge. Tyrosine 484 is a binding site for substrate. FAD-binding positions include tryptophan 485 to histidine 486 and glycine 514. The active-site Proton donor is histidine 486. Catalysis depends on histidine 524, which acts as the Proton acceptor. Residue proline 525–glutamine 526 coordinates FAD.

The protein belongs to the GMC oxidoreductase family. Monomer. It depends on FAD as a cofactor. Post-translationally, glycosylated. Deglycosylation does not affect the enzymatic activity.

It carries out the reaction (R)-mandelonitrile = benzaldehyde + hydrogen cyanide. Involved in cyanogenesis, the release of HCN from injured tissues. Catalyzes the stereospecific addition of HCN to a variety of aldehydes in vitro. Has no oxidase activity. The redox properties of the FAD cofactor appear to be unimportant for catalysis. This is (R)-mandelonitrile lyase 2 (MDL2) from Prunus dulcis (Almond).